The sequence spans 436 residues: MMKCSFFRAILVAVGLMAAAVVATPANALVTLDIRKGNVQPMPIAITDFLQGDMGAQVSQVIAADLQRSGLFAPINKSAFIEKISNPDASPRFEDWKVINAQALVTGRVTQEADGRLRAEFRLWDPFAGQQMTGQQFYTQPENWRRVAHIIADAIYKQITGEEGYFDTRVVFVSESGTKQQRKRQLAIMDQDGFNVRMLTDGSDLVLTPRFSPNRQEVTYMSFANQQPRVYLLQLETGQREVVGNFPGMTFSPRFSPDGQKVIMSLQQEGNSNIYTMDLRSRTTTRLTSTAAIDTSPSYSPDGARVSFESDRGGKPQIYVMNADGSGQTRISFGDGSYSTPVWSPRGDLIAFTKQAGGKFSIGVMKPDGSGERILTTGFHNEGPTWAPNGRVLMFFRQAAGAGGPQLYSIDLTGYNEQLVKTPSYGSDPAWSPLLE.

A signal peptide spans Met1–Ala28.

Belongs to the TolB family. As to quaternary structure, the Tol-Pal system is composed of five core proteins: the inner membrane proteins TolA, TolQ and TolR, the periplasmic protein TolB and the outer membrane protein Pal. They form a network linking the inner and outer membranes and the peptidoglycan layer.

The protein localises to the periplasm. Functionally, part of the Tol-Pal system, which plays a role in outer membrane invagination during cell division and is important for maintaining outer membrane integrity. The chain is Tol-Pal system protein TolB from Rhizobium etli (strain CIAT 652).